The following is a 1184-amino-acid chain: MYIEDIIIDGFKSYANRTVIEGFDPTFNAITGLNGSGKSNILDSICFVLGISNLSQVRVDSLQELVYKKGQAGITKASVTITFNNSDKKQSPAGYEHLDKITVTRQVAIGGRNKYLINGHNAQLSRVQDLFHSVQLNVNNPHFLIMQGRITKVLNMKPPEILAMIEEAAGTRMFEMKKNSALNTIEKKQKKVDEITKVLAEEITPTLDKLRGERTSYMKFTNNQTLIDRLQRFIIAYEYYTYEKKLESSEFESFKAEIDKGQKRKKDLTLKSTDLKAKISELAKQREKETNLEEMDQQEQKLSKELVKYQTSHKHQKESLDKEEGAINNLANTREEIKQSIQQKQKEKQSMEKKIQSIVEENQQINAELKTLQNKHNTMTTGISTGADGSSAAEDGSYTEQLMEAKKTAVNAASEYKQAEFRVKHLQSELIAKRKAITQEQTDHKKLQAEQELVEREIQQLTRSIQELQLDNSKQQELTEKKRQLEPLVSKLREEVGNASAQLSGLEFNYTDPSKSFDRSKVKGIVANLITLKDVETATALEICASGKLYNIVIEDDETGKALLSKGQLKRRVTLLPLNKVEGRSIDPQKIKNAQKIAPNGAVKPAIEFVEYDKELQPAMNFVFGSTFIATDKKYAQKAAFDSSIKVRTISLEGDEYNPAGSLTGGSRPPSGSILTQIQRLNENNRCLRENQSQLEHINFELVQLKSVTDRFKQLEQQLNIKQHAASLIAQRFQLNPHHQLLESIKEMEKSIESDTQLITNSMIKEKEALEKVKQLESQVNDFQSIRESQLKDLEKKIQITKEKCIKSNKIVKGEQVFIEKLDLEIQEMDNELENLSKETQGNQGTISKMRKDVDTLARSISETNKQIQDIRETLSEIRKDMAQKNDAIRSLHQELEKIQSEITEIDMSTEKLKSRMNRVDKDRQEASKWLEAAIKKHTWIKNEKQLFNRPGSDFDFNATDPSKANSEYIKLQEEQEKLSKTINRKVMSMFEKAEQEYQELMEKKKIIENDKSKIEHVIRELDEKKNESLRTTWKKVNKDFGSIFSTLLPGTSAKLEPPEGQNELFGLEVKVAFGDVWKETLSELSGGQKSLLALSLILSLLLFKPAPMYILDEIDAALDLSHTQNIGMMLKQHFTSSQFIVVSLKEGMFTNANVLFETKFIDGVSKVHRTVFNKKDKQVGKKK.

32-39 contacts ATP; the sequence is GLNGSGKS. Positions 520-639 constitute an SMC hinge domain; that stretch reads SKVKGIVANL…ATDKKYAQKA (120 aa).

It belongs to the SMC family. SMC2 subfamily. As to quaternary structure, forms a heterodimer with smc4. Component of the condensin complex, which contains the smc2-smc4 heterodimer.

The protein resides in the nucleus. In terms of biological role, central component of the condensin complex, a complex required for conversion of interphase chromatin into mitotic-like condense chromosomes. The condensin complex probably introduces positive supercoils into relaxed DNA in the presence of type I topoisomerases and converts nicked DNA into positive knotted forms in the presence of type II topoisomerases. The protein is Structural maintenance of chromosomes protein 2 (smc2) of Dictyostelium discoideum (Social amoeba).